The chain runs to 1093 residues: Carbamoyl phosphate synthase large chain (1093 aa).

The carboxyphosphate synthetic domain stretch occupies residues M1 to E412. The ATP site is built by R139, R179, G185, G186, E218, V220, E225, G251, V252, H253, Q295, and E309. Residues K143–V338 form the ATP-grasp 1 domain. Mg(2+) is bound by residues Q295, E309, and N311. Positions 295, 309, and 311 each coordinate Mn(2+). The tract at residues T413–A560 is oligomerization domain. Positions P561 to G952 are carbamoyl phosphate synthetic domain. Positions G689–T880 constitute an ATP-grasp 2 domain. ATP contacts are provided by R725, H764, L766, E771, G796, I797, H798, S799, Q839, and E851. Q839, E851, and N853 together coordinate Mg(2+). Mn(2+) is bound by residues Q839, E851, and N853. An MGS-like domain is found at L953 to K1093. The interval L953–K1093 is allosteric domain.

Belongs to the CarB family. In terms of assembly, composed of two chains; the small (or glutamine) chain promotes the hydrolysis of glutamine to ammonia, which is used by the large (or ammonia) chain to synthesize carbamoyl phosphate. Tetramer of heterodimers (alpha,beta)4. Mg(2+) serves as cofactor. Mn(2+) is required as a cofactor.

The enzyme catalyses hydrogencarbonate + L-glutamine + 2 ATP + H2O = carbamoyl phosphate + L-glutamate + 2 ADP + phosphate + 2 H(+). It carries out the reaction hydrogencarbonate + NH4(+) + 2 ATP = carbamoyl phosphate + 2 ADP + phosphate + 2 H(+). The protein operates within amino-acid biosynthesis; L-arginine biosynthesis; carbamoyl phosphate from bicarbonate: step 1/1. It participates in pyrimidine metabolism; UMP biosynthesis via de novo pathway; (S)-dihydroorotate from bicarbonate: step 1/3. Large subunit of the glutamine-dependent carbamoyl phosphate synthetase (CPSase). CPSase catalyzes the formation of carbamoyl phosphate from the ammonia moiety of glutamine, carbonate, and phosphate donated by ATP, constituting the first step of 2 biosynthetic pathways, one leading to arginine and/or urea and the other to pyrimidine nucleotides. The large subunit (synthetase) binds the substrates ammonia (free or transferred from glutamine from the small subunit), hydrogencarbonate and ATP and carries out an ATP-coupled ligase reaction, activating hydrogencarbonate by forming carboxy phosphate which reacts with ammonia to form carbamoyl phosphate. The chain is Carbamoyl phosphate synthase large chain from Acidobacterium capsulatum (strain ATCC 51196 / DSM 11244 / BCRC 80197 / JCM 7670 / NBRC 15755 / NCIMB 13165 / 161).